Consider the following 303-residue polypeptide: Probable cell division protein WhiA (303 aa).

The segment at residues 272–303 (SIQQLADSLSTPLTKSGVNHRLRKINKIADEL) is a DNA-binding region (H-T-H motif).

It belongs to the WhiA family.

In terms of biological role, involved in cell division and chromosome segregation. The protein is Probable cell division protein WhiA of Streptococcus pneumoniae serotype 4 (strain ATCC BAA-334 / TIGR4).